We begin with the raw amino-acid sequence, 528 residues long: Endoglucanase 24 (528 aa).

An N-terminal signal peptide occupies residues 1–24 (MGSKTKGCCGWLIVALVASLVATA). The Nucleophile role is filled by Asp109. N-linked (GlcNAc...) asparagine glycosylation is present at Asn259. The active site involves His446. Asn487 is a glycosylation site (N-linked (GlcNAc...) asparagine). Active-site residues include Asp492 and Glu501.

It belongs to the glycosyl hydrolase 9 (cellulase E) family.

It is found in the secreted. The catalysed reaction is Endohydrolysis of (1-&gt;4)-beta-D-glucosidic linkages in cellulose, lichenin and cereal beta-D-glucans.. The polypeptide is Endoglucanase 24 (Oryza sativa subsp. japonica (Rice)).